Here is a 365-residue protein sequence, read N- to C-terminus: Probable caffeine synthase 5 (365 aa).

Position 18 (Y18) interacts with S-adenosyl-L-homocysteine. T25 contributes to the caffeine binding site. S-adenosyl-L-homocysteine is bound by residues C61, N66, D98, L99, S134, and F135. Residues Y152, H155, and W156 each coordinate caffeine. Mg(2+) contacts are provided by N173, D259, F261, and N262. F317 contacts caffeine.

Belongs to the methyltransferase superfamily. Type-7 methyltransferase family. Mg(2+) serves as cofactor.

The protein operates within alkaloid biosynthesis. In terms of biological role, may be involved in the biosynthesis of caffeine. The sequence is that of Probable caffeine synthase 5 from Camellia sinensis (Tea plant).